Here is a 92-residue protein sequence, read N- to C-terminus: Small nuclear ribonucleoprotein E (92 aa).

A Sm domain is found at 18-92 (INLIFRYLQN…NITLLQSVSN (75 aa)).

This sequence belongs to the snRNP Sm proteins family. As to quaternary structure, core component of the spliceosomal U1, U2, U4 and U5 small nuclear ribonucleoproteins (snRNPs), the building blocks of the spliceosome. Most spliceosomal snRNPs contain a common set of Sm proteins, SNRPB, SNRPD1, SNRPD2, SNRPD3, SNRPE, SNRPF and SNRPG that assemble in a heptameric protein ring on the Sm site of the small nuclear RNA to form the core snRNP. Component of the U1 snRNP. The U1 snRNP is composed of the U1 snRNA and the 7 core Sm proteins SNRPB, SNRPD1, SNRPD2, SNRPD3, SNRPE, SNRPF and SNRPG, and at least three U1 snRNP-specific proteins SNRNP70/U1-70K, SNRPA/U1-A and SNRPC/U1-C. Component of the U4/U6-U5 tri-snRNP complex composed of the U4, U6 and U5 snRNAs and at least PRPF3, PRPF4, PRPF6, PRPF8, PRPF31, SNRNP200, TXNL4A, SNRNP40, SNRPB, SNRPD1, SNRPD2, SNRPD3, SNRPE, SNRPF, SNRPG, DDX23, CD2BP2, PPIH, SNU13, EFTUD2, SART1 and USP39, plus LSM2, LSM3, LSM4, LSM5, LSM6, LSM7 and LSM8. Component of the U7 snRNP complex, or U7 Sm protein core complex, that is composed of the U7 snRNA and at least LSM10, LSM11, SNRPB, SNRPD3, SNRPE, SNRPF and SNRPG; the complex does not contain SNRPD1 and SNRPD2. Component of the minor spliceosome, which splices U12-type introns. Part of the SMN-Sm complex that contains SMN1, GEMIN2/SIP1, DDX20/GEMIN3, GEMIN4, GEMIN5, GEMIN6, GEMIN7, GEMIN8, STRAP/UNRIP and the Sm proteins SNRPB, SNRPD1, SNRPD2, SNRPD3, SNRPE, SNRPF and SNRPG; catalyzes core snRNPs assembly. Forms a 6S pICln-Sm complex composed of CLNS1A/pICln, SNRPD1, SNRPD2, SNRPE, SNRPF and SNRPG; ring-like structure where CLNS1A/pICln mimics additional Sm proteins and which is unable to assemble into the core snRNP. Interacts with SMN1; the interaction is direct. Interacts with GEMIN2 (via N-terminus); the interaction is direct. Interacts with SNRPF; the interaction is direct. Interacts with SNRPG; the interaction is direct.

The protein resides in the cytoplasm. Its subcellular location is the cytosol. It is found in the nucleus. In terms of biological role, plays a role in pre-mRNA splicing as a core component of the spliceosomal U1, U2, U4 and U5 small nuclear ribonucleoproteins (snRNPs), the building blocks of the spliceosome. Component of both the pre-catalytic spliceosome B complex and activated spliceosome C complexes. As a component of the minor spliceosome, involved in the splicing of U12-type introns in pre-mRNAs. As part of the U7 snRNP it is involved in histone 3'-end processing. This Bos taurus (Bovine) protein is Small nuclear ribonucleoprotein E (SNRPE).